The primary structure comprises 2871 residues: Fibrillin-1 (2871 aa).

An N-terminal signal peptide occupies residues 1 to 24; it reads MRRGGLLEVALGFTVLLASYTSHG. The propeptide occupies 25-44; that stretch reads ADTNLEAGNVKETRANRAKR. The fibrillin unique N-terminal (FUN) domain stretch occupies residues 45 to 81; sequence RGGGGHDALKGPNVCGSRYNAYCCPGWKTLPGGNQCI. The segment at 45 to 450 is N-terminal domain; that stretch reads RGGGGHDALK…PPRVLPVNVT (406 aa). 11 disulfide bridges follow: cysteine 59–cysteine 68, cysteine 67–cysteine 80, cysteine 85–cysteine 94, cysteine 89–cysteine 100, cysteine 102–cysteine 111, cysteine 119–cysteine 129, cysteine 123–cysteine 134, cysteine 136–cysteine 145, cysteine 150–cysteine 160, cysteine 154–cysteine 166, and cysteine 168–cysteine 177. EGF-like domains follow at residues 81–112, 115–146, and 147–178; these read IVPICRHSCGDGFCSRPNMCTCPSGQIAPSCG, SIQHCNIRCMNGGSCSDDHCLCQKGYIGTHCG, and QPVCESGCLNGGRCVAPNRCACTYGFTGPQCE. The interaction with MFAP4 stretch occupies residues 119-329; that stretch reads CNIRCMNGGS…YTSPDGTRCI (211 aa). Residues 184–236 enclose the TB 1 domain; it reads GPCFTVISNQMCQGQLSGIVCTKTLCCATVGRAWGHPCEMCPAQPHPCRRGFI. The hybrid domain 1 stretch occupies residues 195–221; that stretch reads CQGQLSGIVCTKTLCCATVGRAWGHPC. Residues 246–287 enclose the EGF-like 4; calcium-binding domain; sequence DVDECQAIPGLCQGGNCINTVGSFECKCPAGHKFNEVSQKCE. 6 cysteine pairs are disulfide-bonded: cysteine 250–cysteine 262, cysteine 257–cysteine 271, cysteine 273–cysteine 286, cysteine 292–cysteine 304, cysteine 299–cysteine 313, and cysteine 315–cysteine 328. The O-linked (Glc) serine glycan is linked to serine 268. Positions 288 to 329 constitute an EGF-like 5; calcium-binding domain; it reads DIDECSTIPGICDGGECTNTVSSYFCKCPPGFYTSPDGTRCI. Residues 334–389 form the TB 2 domain; sequence GYCYTALANGRCSNQLPQSITKMQCCCDVGRCWSPGVTVAPEMCPIRATEDFNKLC. N-linked (GlcNAc...) asparagine glycosylation occurs at asparagine 448. Positions 449–489 constitute an EGF-like 6 domain; the sequence is VTDYCQLFRYLCQNGRCIPTPGSYRCECNKGFQLDLRGECI. Cystine bridges form between cysteine 453/cysteine 465, cysteine 460/cysteine 474, cysteine 476/cysteine 488, cysteine 494/cysteine 504, cysteine 499/cysteine 513, cysteine 515/cysteine 528, cysteine 534/cysteine 546, cysteine 541/cysteine 555, cysteine 557/cysteine 570, cysteine 576/cysteine 587, cysteine 582/cysteine 596, cysteine 598/cysteine 611, cysteine 617/cysteine 628, cysteine 623/cysteine 637, and cysteine 639/cysteine 652. Serine 471 carries an O-linked (Glc) serine glycan. Residues 490–529 form the EGF-like 7; calcium-binding domain; that stretch reads DVDECEKNPCAGGECINTQGSYTCQCRPGYQSTLTRTECR. O-linked (Glc) serine glycosylation is present at serine 510. An EGF-like 8; calcium-binding domain is found at 530-571; it reads DIDECLQNGRICNNGRCINTDGSFHCVCNAGFHVTRDGKNCE. Positions 572–612 constitute an EGF-like 9; calcium-binding domain; it reads DMDECSIRNMCLNGMCINEDGSFKCICKPGFQLASDGRYCK. Residues 613-653 enclose the EGF-like 10; calcium-binding domain; it reads DINECETPGICMNGRCVNTDGSYRCECFPGLAVGLDGRVCV. A TB 3 domain is found at 659-711; the sequence is STCYGGYKRGQCVKPLFGAVTKSECCCASTEYAFGEPCQPCPSQNSAEYQALC. One can recognise an EGF-like 11; calcium-binding domain in the interval 723–764; that stretch reads DINECALDPDICPNGICENLRGTYKCICNSGYEVDSTGKNCV. 16 disulfides stabilise this stretch: cysteine 727–cysteine 739, cysteine 734–cysteine 748, cysteine 750–cysteine 763, cysteine 769–cysteine 781, cysteine 776–cysteine 790, cysteine 792–cysteine 805, cysteine 811–cysteine 821, cysteine 816–cysteine 830, cysteine 832–cysteine 845, cysteine 853–cysteine 875, cysteine 862–cysteine 887, cysteine 876–cysteine 890, cysteine 896–cysteine 908, cysteine 914–cysteine 926, cysteine 921–cysteine 935, and cysteine 937–cysteine 950. The 42-residue stretch at 765 to 806 folds into the EGF-like 12; calcium-binding domain; the sequence is DINECVLNSLLCDNGQCRNTPGSFVCTCPKGFIYKPELKTCE. The EGF-like 13; calcium-binding domain occupies 807–846; that stretch reads DIDECESSPCINGVCKNSPGSFICECSSESTLDPTKTICI. The region spanning 851–902 is the TB 4 domain; it reads GTCWQTVIDGRCEININGATLKSQCCSSLGAAWGSPCTPCQVDPICGKGYSR. Positions 862–887 are hybrid domain 2; the sequence is CEININGATLKSQCCSSLGAAWGSPC. The EGF-like 14; calcium-binding domain occupies 910–951; it reads DIDECEVFPGVCKNGLCVNSKGSFKCQCPSGMTLDATGRICL. The region spanning 956–1008 is the TB 5 domain; the sequence is ETCFLRYEDEECTLPVAGRHRMDACCCSVGAAWGTEECEECPVRNTPEYEELC. The EGF-like 15; calcium-binding domain maps to 1028 to 1069; that stretch reads DINECKMIPNLCTHGKCRNTIGSFKCRCDSGFALDSEERNCT. Disulfide bonds link cysteine 1032-cysteine 1044, cysteine 1039-cysteine 1053, cysteine 1055-cysteine 1068, cysteine 1074-cysteine 1086, cysteine 1081-cysteine 1095, cysteine 1097-cysteine 1111, cysteine 1117-cysteine 1129, cysteine 1124-cysteine 1138, cysteine 1140-cysteine 1153, cysteine 1159-cysteine 1171, cysteine 1166-cysteine 1180, cysteine 1182-cysteine 1195, cysteine 1201-cysteine 1212, cysteine 1208-cysteine 1221, cysteine 1223-cysteine 1236, cysteine 1242-cysteine 1254, cysteine 1249-cysteine 1263, cysteine 1265-cysteine 1278, cysteine 1284-cysteine 1296, cysteine 1291-cysteine 1305, cysteine 1307-cysteine 1320, cysteine 1326-cysteine 1339, cysteine 1333-cysteine 1348, cysteine 1350-cysteine 1361, cysteine 1367-cysteine 1380, cysteine 1374-cysteine 1389, cysteine 1391-cysteine 1402, cysteine 1408-cysteine 1420, cysteine 1415-cysteine 1429, cysteine 1431-cysteine 1444, cysteine 1450-cysteine 1461, cysteine 1456-cysteine 1470, cysteine 1472-cysteine 1485, cysteine 1491-cysteine 1502, cysteine 1497-cysteine 1511, cysteine 1513-cysteine 1526, cysteine 1534-cysteine 1562, cysteine 1549-cysteine 1574, cysteine 1563-cysteine 1577, cysteine 1564-cysteine 1589, cysteine 1610-cysteine 1622, cysteine 1617-cysteine 1631, cysteine 1633-cysteine 1646, cysteine 1652-cysteine 1663, cysteine 1658-cysteine 1672, and cysteine 1674-cysteine 1687. An N-linked (GlcNAc...) asparagine glycan is attached at asparagine 1067. Residues 1070-1112 form the EGF-like 16; calcium-binding domain; that stretch reads DIDECRISPDLCGRGQCVNTPGDFECKCDEGYESGFMMMKNCM. The 42-residue stretch at 1113 to 1154 folds into the EGF-like 17; calcium-binding domain; it reads DIDECQRDPLLCRGGVCLNTEGSYRCECPPGHQLAPNISACI. O-linked (Glc) serine glycosylation occurs at serine 1135. N-linked (GlcNAc...) asparagine glycosylation is present at asparagine 1149. Residues 1155–1196 form the EGF-like 18; calcium-binding domain; the sequence is DINECELSAHLCPHGRCVNLIGKYQCACNPGYHSTPDRLFCV. One can recognise an EGF-like 19; calcium-binding domain in the interval 1197–1237; sequence DIDECSIMNGGCETFCTNSEGSYECSCQPGFALMPDQRSCT. A glycan (O-linked (Glc) serine) is linked at serine 1218. The EGF-like 20; calcium-binding domain maps to 1238 to 1279; that stretch reads DIDECEDNPNICDGGQCTNIPGEYRCLCYDGFMASEDMKTCV. The 42-residue stretch at 1280–1321 folds into the EGF-like 21; calcium-binding domain; it reads DVNECDLNPNICLSGTCENTKGSFICHCDMGYSGKKGKTGCT. O-linked (Glc) serine glycosylation is present at serine 1302. The EGF-like 22; calcium-binding domain occupies 1322–1362; sequence DINECEIGAHNCDRHAVCTNTAGSFKCSCSPGWIGDGIKCT. A glycan (O-linked (Glc) serine) is linked at serine 1345. In terms of domain architecture, EGF-like 23; calcium-binding spans 1363–1403; sequence DLDECSNGTHMCSQHADCKNTMGSYRCLCKEGYTGDGFTCT. An N-linked (GlcNAc...) asparagine glycan is attached at asparagine 1369. The O-linked (Glc) serine glycan is linked to serine 1386. One can recognise an EGF-like 24; calcium-binding domain in the interval 1404-1445; it reads DLDECSENLNLCGNGQCLNAPGGYRCECDMGFVPSADGKACE. One can recognise an EGF-like 25; calcium-binding domain in the interval 1446–1486; the sequence is DIDECSLPNICVFGTCHNLPGLFRCECEIGYELDRSGGNCT. A glycan (N-linked (GlcNAc...) asparagine) is linked at asparagine 1484. Positions 1487-1527 constitute an EGF-like 26; calcium-binding domain; it reads DVNECLDPTTCISGNCVNTPGSYTCDCPPDFELNPTRVGCV. A glycan (O-linked (Glc) serine) is linked at serine 1508. The interval 1528-2731 is C-terminal domain; that stretch reads DTRSGNCYLD…GYPKRGRKRR (1204 aa). Residues 1532 to 1589 form the TB 6 domain; it reads GNCYLDIRPRGDNGDTACSNEIGVGVSKASCCCSLGKAWGTPCELCPPVNTSEYKILC. The short motif at 1541-1543 is the Cell attachment site element; it reads RGD. The N-linked (GlcNAc...) asparagine glycan is linked to asparagine 1581. Positions 1606–1647 constitute an EGF-like 27; calcium-binding domain; it reads DIDECQELPGLCQGGKCINTFGSFQCRCPTGYYLNEDTRVCD. A glycan (O-linked (Glc) serine) is linked at serine 1628. Residues 1648–1688 form the EGF-like 28; calcium-binding domain; sequence DVNECETPGICGPGTCYNTVGNYTCICPPDYMQVNGGNNCM. An N-linked (GlcNAc...) asparagine glycan is attached at asparagine 1669. The TB 7 domain occupies 1693–1748; it reads SLCYRNYYADNQTCDGELLFNMTKKMCCCSYNIGRAWNKPCEQCPIPSTDEFATLC. N-linked (GlcNAc...) asparagine glycosylation is found at asparagine 1703 and asparagine 1713. Residues 1766–1807 enclose the EGF-like 29; calcium-binding domain; it reads DIDECREIPGVCENGVCINMVGSFRCECPVGFFYNDKLLVCE. Cystine bridges form between cysteine 1770–cysteine 1782, cysteine 1777–cysteine 1791, cysteine 1793–cysteine 1806, cysteine 1812–cysteine 1824, cysteine 1818–cysteine 1833, cysteine 1835–cysteine 1847, cysteine 1853–cysteine 1865, cysteine 1860–cysteine 1874, cysteine 1876–cysteine 1889, cysteine 1895–cysteine 1905, cysteine 1900–cysteine 1914, cysteine 1916–cysteine 1928, cysteine 1934–cysteine 1947, cysteine 1942–cysteine 1956, cysteine 1958–cysteine 1971, cysteine 1977–cysteine 1989, cysteine 1984–cysteine 1998, cysteine 2000–cysteine 2011, cysteine 2017–cysteine 2029, cysteine 2024–cysteine 2038, cysteine 2040–cysteine 2053, cysteine 2061–cysteine 2083, cysteine 2070–cysteine 2096, cysteine 2084–cysteine 2099, cysteine 2085–cysteine 2111, cysteine 2131–cysteine 2142, cysteine 2137–cysteine 2151, cysteine 2153–cysteine 2164, cysteine 2170–cysteine 2181, cysteine 2176–cysteine 2190, cysteine 2192–cysteine 2204, cysteine 2210–cysteine 2221, cysteine 2217–cysteine 2230, cysteine 2232–cysteine 2245, cysteine 2251–cysteine 2265, cysteine 2258–cysteine 2274, cysteine 2276–cysteine 2289, cysteine 2295–cysteine 2307, cysteine 2302–cysteine 2316, and cysteine 2318–cysteine 2331. The EGF-like 30; calcium-binding domain maps to 1808-1848; the sequence is DIDECQNGPVCQRNAECINTAGSYRCDCKPGYRFTSTGQCN. Serine 1830 carries an O-linked (Glc) serine glycan. The EGF-like 31; calcium-binding domain maps to 1849-1890; sequence DRNECQEIPNICSHGQCIDTVGSFYCLCHTGFKTNADQTMCL. O-linked (Glc) serine glycosylation occurs at serine 1871. Residues 1891-1929 enclose the EGF-like 32; calcium-binding domain; sequence DINECERDACGNGTCRNTIGSFNCRCNHGFILSHNNDCI. N-linked (GlcNAc...) asparagine glycosylation is present at asparagine 1902. Serine 1911 is a glycosylation site (O-linked (Glc) serine). Positions 1930 to 1972 constitute an EGF-like 33; calcium-binding domain; sequence DVDECATGNGNLCRNGQCINTVGSFQCQCNEGYEVAPDGRTCV. O-linked (Glc) serine glycosylation occurs at serine 1953. The 40-residue stretch at 1973 to 2012 folds into the EGF-like 34; calcium-binding domain; the sequence is DINECLLDPRKCAPGTCQNLDGSYRCICPPGYSLQNDKCE. In terms of domain architecture, EGF-like 35; calcium-binding spans 2013 to 2054; sequence DIDECVEEPEICALGTCSNTEGSFKCLCPDGFSLSSTGRRCQ. The O-linked (Glc) serine glycan is linked to serine 2035. The region spanning 2059–2111 is the TB 8 domain; the sequence is SYCYAKFEGGKCSSPKSRNHSKQECCCALKGEGWGDPCELCPTEPDEAFRQIC. N-linked (GlcNAc...) asparagine glycosylation is present at asparagine 2077. Positions 2127-2165 constitute an EGF-like 36; calcium-binding domain; that stretch reads DMDECKEPDVCKHGQCINTDGSYRCECPFGYILQGNECV. Serine 2148 is a glycosylation site (O-linked (Glc) serine). An EGF-like 37; calcium-binding domain is found at 2166–2205; the sequence is DTDECSVGNPCGNGTCKNVIGGFECTCEEGFEPGPMMTCE. Asparagine 2178 carries N-linked (GlcNAc...) asparagine glycosylation. The EGF-like 38; calcium-binding domain occupies 2206–2246; sequence DINECAQNPLLCAFRCVNTYGSYECKCPAGYVLREDRRMCK. Serine 2227 is a glycosylation site (O-linked (Glc) serine). Positions 2247 to 2290 constitute an EGF-like 39; calcium-binding domain; that stretch reads DEDECEEGKHDCAEKQMECKNLIGTYLCICGPGYQRRPDGEGCV. The region spanning 2291 to 2332 is the EGF-like 40; calcium-binding domain; it reads DENECQTKPGICENGRCLNTRGSYTCECNDGFTASPNQDECL. Serine 2313 is a glycosylation site (O-linked (Glc) serine). A TB 9 domain is found at 2337 to 2390; that stretch reads GYCFTEVLQNMCQIGSSNRNPVTKSECCCDGGRGWGPHCEICPFQGTVAFKKLC. The region spanning 2402–2443 is the EGF-like 41; calcium-binding domain; that stretch reads DIDECKVIHDVCRNGECVNDRGSYHCICKTGYTPDITGTACV. 21 disulfide bridges follow: cysteine 2406-cysteine 2418, cysteine 2413-cysteine 2427, cysteine 2429-cysteine 2442, cysteine 2448-cysteine 2459, cysteine 2455-cysteine 2468, cysteine 2470-cysteine 2483, cysteine 2489-cysteine 2500, cysteine 2496-cysteine 2509, cysteine 2511-cysteine 2522, cysteine 2528-cysteine 2541, cysteine 2535-cysteine 2550, cysteine 2552-cysteine 2565, cysteine 2571-cysteine 2581, cysteine 2577-cysteine 2590, cysteine 2592-cysteine 2605, cysteine 2611-cysteine 2622, cysteine 2617-cysteine 2631, cysteine 2633-cysteine 2646, cysteine 2652-cysteine 2663, cysteine 2659-cysteine 2672, and cysteine 2674-cysteine 2686. An EGF-like 42; calcium-binding domain is found at 2444–2484; sequence DLNECNQAPKPCNFICKNTEGSYQCSCPKGYILQEDGRSCK. The O-linked (Glc) serine glycan is linked to serine 2465. In terms of domain architecture, EGF-like 43; calcium-binding spans 2485 to 2523; that stretch reads DLDECATKQHNCQFLCVNTIGSFTCKCPPGFTQHHTACI. The region spanning 2524 to 2566 is the EGF-like 44; calcium-binding domain; sequence DNNECTSDINLCGSKGICQNTPGSFTCECQRGFSLDPSGASCE. O-linked (Glc) serine glycosylation is present at serine 2547. The 40-residue stretch at 2567-2606 folds into the EGF-like 45; calcium-binding domain; that stretch reads DVDECEGNHRCQHGCQNIIGGYRCSCPQGYLQHYQWNQCV. In terms of domain architecture, EGF-like 46; calcium-binding spans 2607-2647; the sequence is DENECLSAHICGGASCHNTLGSYKCMCPAGFQYEQFSGGCQ. O-linked (Glc) serine glycosylation occurs at serine 2628. One can recognise an EGF-like 47; calcium-binding domain in the interval 2648–2687; the sequence is DINECGSAQAPCSYGCSNTEGGYLCACPPGYFRIGQGHCV. A phosphoserine mark is found at serine 2702 and serine 2709. N-linked (GlcNAc...) asparagine glycosylation is found at asparagine 2734, asparagine 2750, and asparagine 2767.

Belongs to the fibrillin family. Interacts with COL16A1. Interacts with integrin alpha-V/beta-3. Interacts with ADAMTS10; this interaction promotes microfibril assembly. Interacts with THSD4; this interaction promotes fibril formation. Interacts (via N-terminal domain) with FBLN2 and FBLN5. Interacts with ELN. Forms a ternary complex with ELN and FBLN2 or FBLN5 and a significant interaction with ELN seen only in the presence of FBLN2 or FBLN5. Interacts (via N-terminal domain) with LTBP2 (via C-terminal domain) in a Ca(+2)-dependent manner. Interacts (via N-terminal domain) with LTBP1 (via C-terminal domain). Interacts with integrins ITGA5:ITGB1, ITGAV:ITGB3 and ITGAV:ITGB6. Interacts (via N-terminal domain) with BMP2, BMP4, BMP7, BMP10 and GDF5. Interacts (via N-terminal domain) with MFAP2 and MFAP5. Interacts with ADAMTSL5. Interacts with MFAP4. Interacts (via N-terminal domain) with TNFSF11 in a Ca(+2)-dependent manner. Interacts (via N-terminal domain) with EFEMP2; this interaction inhibits EFEMP2 binding to LOX and ELN. In terms of processing, cleavage of N- and C-terminus by furin is required for incorporation into the extracellular matrix and assembly into microfibrils. The C-terminus, which corresponds to the Asprosin chain, was initially thought to constitute a propeptide. Fibrillin-1 and Asprosin chains are still linked together during the secretion from cells, but are subsequently separated by furin, an essential step for incorporation of Fibrillin-1 into the nascent microfibrils. Forms intermolecular disulfide bonds either with other fibrillin-1 molecules or with other components of the microfibrils. Post-translationally, O-glycosylated on serine residues by POGLUT2 and POGLUT3 which is necessary for efficient protein secretion.

Its subcellular location is the secreted. It is found in the extracellular space. The protein localises to the extracellular matrix. Its function is as follows. Structural component of the 10-12 nm diameter microfibrils of the extracellular matrix, which conveys both structural and regulatory properties to load-bearing connective tissues. Fibrillin-1-containing microfibrils provide long-term force bearing structural support. In tissues such as the lung, blood vessels and skin, microfibrils form the periphery of the elastic fiber, acting as a scaffold for the deposition of elastin. In addition, microfibrils can occur as elastin-independent networks in tissues such as the ciliary zonule, tendon, cornea and glomerulus where they provide tensile strength and have anchoring roles. Fibrillin-1 also plays a key role in tissue homeostasis through specific interactions with growth factors, such as the bone morphogenetic proteins (BMPs), growth and differentiation factors (GDFs) and latent transforming growth factor-beta-binding proteins (LTBPs), cell-surface integrins and other extracellular matrix protein and proteoglycan components. Regulates osteoblast maturation by controlling TGF-beta bioavailability and calibrating TGF-beta and BMP levels, respectively. Negatively regulates osteoclastogenesis by binding and sequestering an osteoclast differentiation and activation factor TNFSF11. This leads to disruption of TNFSF11-induced Ca(2+) signaling and impairment of TNFSF11-mediated nuclear translocation and activation of transcription factor NFATC1 which regulates genes important for osteoclast differentiation and function. Mediates cell adhesion via its binding to cell surface receptors integrins ITGAV:ITGB3 and ITGA5:ITGB1. Binds heparin and this interaction plays an important role in the assembly of microfibrils. Hormone that targets the liver to increase plasma glucose levels. Secreted by white adipose tissue and circulates in the plasma. Acts in response to fasting and promotes blood glucose elevation by binding to the surface of hepatocytes. Promotes hepatocyte glucose release by activating the protein kinase A activity in the liver, resulting in rapid glucose release into the circulation. The chain is Fibrillin-1 from Bos taurus (Bovine).